The following is a 282-amino-acid chain: N-methyltransferase gliN (282 aa).

The protein belongs to the methyltransferase superfamily. LaeA methyltransferase family.

It functions in the pathway mycotoxin biosynthesis. N-methyltransferase; part of the gene cluster that mediates the biosynthesis of gliotoxin, a member of the epipolythiodioxopiperazine (ETP) class of toxins characterized by a disulfide bridged cyclic dipeptide. The first step in gliotoxin biosynthesis is the condensation of serine and phenylalanine to form the cyclo-L-phenylalanyl-L-serine diketopiperazine (DKP) by the NRPS gliP. GliP is also able to produce the DKP cyclo-L-tryptophanyl-L-serine, suggesting that the substrate specificity of the first adenylation (A) domain in gliP is sufficiently relaxed to accommodate both L-Phe and L-Trp. The cytochrome P450 monooxygenase gliC has been shown to catalyze the subsequent hydroxylation of the alpha-carbon of L-Phe in cyclo-L-phenylalanyl-L-serine whereas the second cytochrome P450 enzyme, gliF, is presumably involved in the modification of the DKP side chain. The glutathione S-transferase (GST) gliG then forms a bis-glutathionylated biosynthetic intermediate which is responsible for the sulfurization of gliotoxin. This bis-glutathionylated intermediate is subsequently processed by the gamma-glutamyl cyclotransferase gliK to remove both gamma-glutamyl moieties. Subsequent processing via gliI yields a biosynthetic intermediate, which is N-methylated via the N-methyltransferase gliN, before the gliotoxin oxidoreductase gliT-mediated disulfide bridge closure. GliN-mediated amide methylation confers stability to ETP, damping the spontaneous formation of tri- and tetrasulfides. Intracellular dithiol gliotoxin oxidized by gliT is subsequently effluxed by gliA. Gliotoxin contributes to pathogenesis during invasive aspergillosis. In macrophages and neutrophils, gliotoxin showed inhibition of various different cell functions including cytokine production, antigen presentation, phagocytosis, and production of reactive oxygen species. The polypeptide is N-methyltransferase gliN (Aspergillus fumigatus (strain ATCC MYA-4609 / CBS 101355 / FGSC A1100 / Af293) (Neosartorya fumigata)).